The primary structure comprises 252 residues: MQIVVATHNEGKLVEIRRILEEDLGADAENIELVSAGSLHLPDPVETGVTFQENALLKARAVAIRTGLPAVADDSGLIVDVMGNAPGILSARWAGAHGHDKANNALLLAQIEDIPDDKRTARFRCAAALVVPDTETGADVTGGVAADGITVHTTAADGSPAPVHARYAIKSETVELGDMPGRIIREARGEHGFGYDPLFVPDDQPAGRVSTEPDHEGEPLTSAEMTPAEKNAISHRGKALKALVPAIEALLH.

7–12 (THNEGK) contributes to the substrate binding site. Catalysis depends on Asp-74, which acts as the Proton acceptor. Mg(2+) is bound at residue Asp-74. Substrate is bound by residues Ser-75 and 193-196 (FGYD). Residues 202-229 (DDQPAGRVSTEPDHEGEPLTSAEMTPAE) are disordered. Residues Lys-230 and 235-236 (HR) contribute to the substrate site.

The protein belongs to the HAM1 NTPase family. Homodimer. It depends on Mg(2+) as a cofactor.

It catalyses the reaction XTP + H2O = XMP + diphosphate + H(+). The enzyme catalyses dITP + H2O = dIMP + diphosphate + H(+). The catalysed reaction is ITP + H2O = IMP + diphosphate + H(+). Its function is as follows. Pyrophosphatase that catalyzes the hydrolysis of nucleoside triphosphates to their monophosphate derivatives, with a high preference for the non-canonical purine nucleotides XTP (xanthosine triphosphate), dITP (deoxyinosine triphosphate) and ITP. Seems to function as a house-cleaning enzyme that removes non-canonical purine nucleotides from the nucleotide pool, thus preventing their incorporation into DNA/RNA and avoiding chromosomal lesions. The polypeptide is dITP/XTP pyrophosphatase (Bifidobacterium longum (strain DJO10A)).